A 505-amino-acid chain; its full sequence is Glycerol kinase (505 aa).

Position 12 (Thr12) interacts with ADP. ATP-binding residues include Thr12, Thr13, and Ser14. Thr12 contacts sn-glycerol 3-phosphate. An ADP-binding site is contributed by Arg16. Sn-glycerol 3-phosphate-binding residues include Arg82, Glu83, Tyr134, and Asp246. Glycerol contacts are provided by Arg82, Glu83, Tyr134, Asp246, and Gln247. Residues Thr268 and Gly312 each coordinate ADP. The ATP site is built by Thr268, Gly312, Gln316, and Gly413. Residues Gly413 and Asn417 each coordinate ADP.

It belongs to the FGGY kinase family.

It carries out the reaction glycerol + ATP = sn-glycerol 3-phosphate + ADP + H(+). It participates in polyol metabolism; glycerol degradation via glycerol kinase pathway; sn-glycerol 3-phosphate from glycerol: step 1/1. Inhibited by fructose 1,6-bisphosphate (FBP). Its function is as follows. Key enzyme in the regulation of glycerol uptake and metabolism. Catalyzes the phosphorylation of glycerol to yield sn-glycerol 3-phosphate. In Beutenbergia cavernae (strain ATCC BAA-8 / DSM 12333 / CCUG 43141 / JCM 11478 / NBRC 16432 / NCIMB 13614 / HKI 0122), this protein is Glycerol kinase.